The following is a 658-amino-acid chain: Probable transketolase (658 aa).

His-24 is a substrate binding site. Thiamine diphosphate-binding positions include His-64 and 113–115 (GPL). A Mg(2+)-binding site is contributed by Asp-154. Thiamine diphosphate-binding residues include Gly-155 and Asn-184. Mg(2+)-binding residues include Asn-184 and Ile-186. The substrate site is built by His-259, Arg-354, and Ser-381. His-259 lines the thiamine diphosphate pocket. Catalysis depends on Glu-408, which acts as the Proton donor. Phe-434 is a binding site for thiamine diphosphate. Residues His-458, Asp-466, and Arg-517 each contribute to the substrate site.

The protein belongs to the transketolase family. In terms of assembly, homodimer. It depends on Mg(2+) as a cofactor. Ca(2+) is required as a cofactor. Requires Mn(2+) as cofactor. The cofactor is Co(2+). Thiamine diphosphate serves as cofactor.

It carries out the reaction D-sedoheptulose 7-phosphate + D-glyceraldehyde 3-phosphate = aldehydo-D-ribose 5-phosphate + D-xylulose 5-phosphate. Necessary for high-efficiency recombination chromosomal DNA during genetic transformation. Functionally, catalyzes the transfer of a two-carbon ketol group from a ketose donor to an aldose acceptor, via a covalent intermediate with the cofactor thiamine pyrophosphate. The chain is Probable transketolase (tkt) from Streptococcus pneumoniae serotype 4 (strain ATCC BAA-334 / TIGR4).